The chain runs to 480 residues: tRNA-2-methylthio-N(6)-dimethylallyladenosine synthase (480 aa).

The MTTase N-terminal domain occupies 25 to 145 (GVFYVHTLGC…LPQLLDQARI (121 aa)). The [4Fe-4S] cluster site is built by C34, C74, C108, C182, C186, and C189. The region spanning 168–397 (RASKVSSWVA…VALQERITEE (230 aa)) is the Radical SAM core domain. The TRAM domain occupies 400–470 (KTFEGRDVEV…RHNLIADPNP (71 aa)).

The protein belongs to the methylthiotransferase family. MiaB subfamily. In terms of assembly, monomer. Requires [4Fe-4S] cluster as cofactor.

The protein resides in the cytoplasm. It carries out the reaction N(6)-dimethylallyladenosine(37) in tRNA + (sulfur carrier)-SH + AH2 + 2 S-adenosyl-L-methionine = 2-methylsulfanyl-N(6)-dimethylallyladenosine(37) in tRNA + (sulfur carrier)-H + 5'-deoxyadenosine + L-methionine + A + S-adenosyl-L-homocysteine + 2 H(+). Functionally, catalyzes the methylthiolation of N6-(dimethylallyl)adenosine (i(6)A), leading to the formation of 2-methylthio-N6-(dimethylallyl)adenosine (ms(2)i(6)A) at position 37 in tRNAs that read codons beginning with uridine. This Bifidobacterium adolescentis (strain ATCC 15703 / DSM 20083 / NCTC 11814 / E194a) protein is tRNA-2-methylthio-N(6)-dimethylallyladenosine synthase.